Here is an 867-residue protein sequence, read N- to C-terminus: Alanine--tRNA ligase (867 aa).

Zn(2+) is bound by residues His558, His562, Cys660, and His664.

This sequence belongs to the class-II aminoacyl-tRNA synthetase family. Zn(2+) is required as a cofactor.

It is found in the cytoplasm. The catalysed reaction is tRNA(Ala) + L-alanine + ATP = L-alanyl-tRNA(Ala) + AMP + diphosphate. In terms of biological role, catalyzes the attachment of alanine to tRNA(Ala) in a two-step reaction: alanine is first activated by ATP to form Ala-AMP and then transferred to the acceptor end of tRNA(Ala). Also edits incorrectly charged Ser-tRNA(Ala) and Gly-tRNA(Ala) via its editing domain. The protein is Alanine--tRNA ligase of Fervidobacterium nodosum (strain ATCC 35602 / DSM 5306 / Rt17-B1).